We begin with the raw amino-acid sequence, 51 residues long: MFRIEGLAPKLDPEEMKRKMREDVVSSIRNFLIYVALLRVTPYILKKLDSI.

An N-acetylmethionine modification is found at Met1. Lys10 participates in a covalent cross-link: Glycyl lysine isopeptide (Lys-Gly) (interchain with G-Cter in SUMO2). The helical transmembrane segment at 27 to 45 (SIRNFLIYVALLRVTPYIL) threads the bilayer.

Belongs to the Tom5 family. Forms part of the preprotein translocase complex of the outer mitochondrial membrane (TOM complex) which consists of at least 7 different proteins (TOMM5, TOMM6, TOMM7, TOMM20, TOMM22, TOMM40 and TOMM70).

Its subcellular location is the mitochondrion outer membrane. The chain is Mitochondrial import receptor subunit TOM5 homolog from Mus musculus (Mouse).